Here is a 22-residue protein sequence, read N- to C-terminus: IIGGYECKPHSQPWQAFLVDNK.

The protein belongs to the peptidase S1 family. In terms of tissue distribution, detected in muscle (at protein level).

The protein localises to the cytoplasm. With respect to regulation, inhibited by the serine protease inhibitors, antipain, aprotinin, DFP, leupeptin, STI and TLCK, and by the cysteine proteinase inhibitors DTNB and to a lesser extent E-64. Not inhibited by the metalloproteinase inhibitor EDTA. In terms of biological role, serine protease that selectively cleaves Arg-|-Xaa bonds. In Cyprinus carpio (Common carp), this protein is Myofibril-bound serine protease.